Reading from the N-terminus, the 602-residue chain is Leucine-rich repeat-containing protein 40 (602 aa).

Positions 1–26 (MSRHMRAPRFDPRAGFHAEGKDRGPS) are disordered. Basic and acidic residues predominate over residues 8-24 (PRFDPRAGFHAEGKDRG). One copy of the LRR 1 repeat lies at 35–58 (ARSSGQLNLAGRNLGEVPQCVWRI). A Phosphoserine modification is found at serine 71. 20 LRR repeats span residues 81–103 (QTDL…DLRL), 104–126 (LPAL…AIRE), 127–149 (LDNL…EITS), 150–172 (LKNL…GFEH), 174–195 (SCLE…DFAL), 196–219 (LSSL…ISRM), 221–241 (RLKH…DVGS), 242–266 (MESL…SCRQ), 268–287 (KELH…HLQH), 288–310 (LQAI…EMAL), 311–334 (LQSL…LGNL), 336–356 (LKFL…IIAK), 398–421 (IATL…LFDA), 424–447 (TTLI…IVEL), 449–470 (EMVL…ELCL), 471–494 (LQKL…MSSL), 496–517 (KLQT…LYRI), 519–540 (TLEA…KMKL), 541–564 (MENL…LGNC), and 566–587 (QLRT…ILMK).

In Mus musculus (Mouse), this protein is Leucine-rich repeat-containing protein 40 (Lrrc40).